A 269-amino-acid chain; its full sequence is BAG family molecular chaperone regulator 4 (269 aa).

A disordered region spans residues 1–40 (MMHNSTEESEWEVRPGGMLVQRRDDAASSDHKPLQDPDSA). Basic and acidic residues predominate over residues 21 to 35 (QRRDDAASSDHKPLQ). The region spanning 46–122 (QTIRITVSHG…LVVVVEDTNK (77 aa)) is the Ubiquitin-like domain. The 82-residue stretch at 138 to 219 (AIAAVNAVTG…NLQEAVDKLK (82 aa)) folds into the BAG domain. A disordered region spans residues 241-269 (SFGNGVGSLNPPPPASPSANVTQDWEKFD).

In terms of assembly, binds to the ATPase domain of HSP70/HSC70 chaperones. Interacts with HSP70-1. In terms of tissue distribution, detected in stems, leaves, flowers and roots.

Its function is as follows. Co-chaperone that regulates diverse cellular pathways, such as programmed cell death and stress responses. This chain is BAG family molecular chaperone regulator 4 (BAG4), found in Arabidopsis thaliana (Mouse-ear cress).